Reading from the N-terminus, the 114-residue chain is Prostate stem cell antigen (114 aa).

The first 11 residues, 1 to 11 (MAGLALQPGTA), serve as a signal peptide directing secretion. In terms of domain architecture, UPAR/Ly6 spans 12–86 (LLCYSCKAQV…CCDTDLCNAS (75 aa)). 5 disulfide bridges follow: C14–C39, C17–C26, C32–C57, C61–C77, and C78–C83. N31 carries an N-linked (GlcNAc...) asparagine glycan. Residue S86 is the site of GPI-anchor amidated serine attachment. The propeptide at 86 to 114 (SGAHALQPAAAILALLPALGLLLWGPGQL) is removed in mature form.

As to quaternary structure, interacts with CHRNA4. In terms of processing, N-glycosylated. In terms of tissue distribution, highly expressed in prostate (basal, secretory and neuroendocrine epithelium cells). Also found in bladder (transitional epithelium), placenta (trophoblasts), stomach (neuroendocrine cells), colon (neuroendocrine cells) and kidney (collecting ducts). Overexpressed in prostate cancers and expression is correlated with tumor stage, grade and androgen-independence. Highly expressed in prostate cancer bone metastases. Expressed in gastric epithelial cells, mainly in the isthmus (at protein level). Not detected in normal intestinal epithelium (at protein level). Expressed in brain cortex; expression is significantly increased in the front cortex of Alzheimer disease patients.

The protein resides in the cell membrane. Functionally, may be involved in the regulation of cell proliferation. Has a cell-proliferation inhibition activity in vitro. May act as a modulator of nicotinic acetylcholine receptors (nAChRs) activity. In vitro inhibits nicotine-induced signaling probably implicating alpha-3:beta-2- or alpha-7-containing nAChRs. This chain is Prostate stem cell antigen (PSCA), found in Homo sapiens (Human).